Consider the following 107-residue polypeptide: uncharacterized protein (107 aa).

Positions Met-1–Ala-34 are cleaved as a signal peptide.

This is an uncharacterized protein from Saccharomyces cerevisiae (strain ATCC 204508 / S288c) (Baker's yeast).